We begin with the raw amino-acid sequence, 954 residues long: MIMNMKNIFYCLLPGLLLGACSNKVYEKTGDSVIVKVQHKETGGPRLVRLQVMGDKLIHVSATADSKFADPQSLIVVPQKKQTSFAVVQNGDTITVSTEEVKASVLASTGEVWFTDKNGELILQENKGGGKTFTPIEVEGTKGYTVCQVFESPEDEAFYGLGQHQADEFNYKGKNEELFQYNTKVSVPFVVSNKNYGILLDSYSFCRFGNPNDYSQLNRIFKLYDKTGQEGALTGTYVPKKGETLVRREDSIYFENLKTIENLPKKLPLMGAKVTYEGEIEPAQTGEFKFILYYAGYVKVYLNNEPVVPERWRTAWNPNSYKFAAHLEAGKRVPLKIEWQPDGGQSYCGLRALTPVNPEEQGKQSWWSEMTKQLDYYFMAGENMDDVISGYRSLTGKSPVMPKWAMGFWQSREKYNTQEEMLGALKGFRDRKIPLDNIVLDWNHWPENAWGSHEFDKARFPDPKAMVDSIHAMHARMMISVWPKFYVTTEHFKEFDENGWMYQQSVKDSLKDWVGPGYHYGFYDAYDPDARKLFWKQMYEHYYPLGIDAWWMDASEPNVRDCTDLEYRKALCGPTALGSSTEFFNAYALMNAEAIYDGQRGVDNNKRVFLLTRSGFAGLQRYSTATWSGDIGTRWEDMKAQISAGLNFAMSGIPYWTMDIGGFCVENRYVAGQKQWNATKTENADYKEWRELNTRWYQFGAFVPLYRAHGQYPFREIWEIAPEGHPAYQSVVYYTKLRYNMMPYIYSLAGMTWFDDYTIMRPLVMDFTADAEVNDIGDQFMFGPSFMVSPVYRYGDRSREIYFPQAEGWYDFYSGKFQAGGERKVIEAPYERIPLYVRAGAIIPFGDDIQYTDEKPAEHIRLYIYQGADGEFTLYEDEGVNYNYEQGMYAMIPMKYDEATKTLVIGERQGEFPGMLKERTFTVVTVNKEKAQPFDLNAKGVTVKYNGSEQTLKL.

The signal sequence occupies residues 1-20 (MIMNMKNIFYCLLPGLLLGA). The N-palmitoyl cysteine moiety is linked to residue C21. Residue C21 is the site of S-diacylglycerol cysteine attachment. The PA14 domain occupies 227-366 (TGQEGALTGT…NPEEQGKQSW (140 aa)). Residues D553 and E556 contribute to the active site. The active-site Proton donor is D630.

It belongs to the glycosyl hydrolase 31 family.

Its subcellular location is the cell inner membrane. It catalyses the reaction Hydrolysis of terminal, non-reducing alpha-D-xylose residues with release of alpha-D-xylose.. It participates in glucan metabolism; xyloglucan degradation. Catalyzes the liberation of alpha-xylose from the non-reducing terminal glucose of xyloglucan oligosaccharides in xyloglucan degradation, converting the 'X' to 'G' units. The sequence is that of Alpha-xylosidase BoGH31A from Bacteroides ovatus (strain ATCC 8483 / DSM 1896 / JCM 5824 / BCRC 10623 / CCUG 4943 / NCTC 11153).